The chain runs to 340 residues: Fructose-bisphosphate aldolase (340 aa).

S53 is a D-glyceraldehyde 3-phosphate binding site. D95 (proton donor) is an active-site residue. Residues H96, D131, E161, and H212 each coordinate Zn(2+). G213 lines the dihydroxyacetone phosphate pocket. H249 contributes to the Zn(2+) binding site. Dihydroxyacetone phosphate contacts are provided by residues 250–252 (GGS) and 271–274 (NLDT).

It belongs to the class II fructose-bisphosphate aldolase family. Zn(2+) serves as cofactor.

It catalyses the reaction beta-D-fructose 1,6-bisphosphate = D-glyceraldehyde 3-phosphate + dihydroxyacetone phosphate. It participates in carbohydrate degradation; glycolysis; D-glyceraldehyde 3-phosphate and glycerone phosphate from D-glucose: step 4/4. In terms of biological role, catalyzes the aldol condensation of dihydroxyacetone phosphate (DHAP or glycerone-phosphate) with glyceraldehyde 3-phosphate (G3P) to form fructose 1,6-bisphosphate (FBP) in gluconeogenesis and the reverse reaction in glycolysis. The protein is Fructose-bisphosphate aldolase (fba) of Streptomyces galbus.